The sequence spans 615 residues: Erythritol-mannosyl-transferase 1 (615 aa).

The segment at 366 to 387 (RTPNNTGASTPTAPISSPDFEE) is disordered. Over residues 367–380 (TPNNTGASTPTAPI) the composition is skewed to polar residues.

Belongs to the UDP-glycosyltransferase family.

The protein resides in the vacuole membrane. Its pathway is secondary metabolite biosynthesis. In terms of biological role, erythritol-mannosyl-transferase; part of the gene cluster that mediates the biosynthesis of mannosylerythritol lipids (MELs), surface-active substances that enhance the availability of water-insoluble substrates. Mannosylerythritol lipid production is responsible for hemolytic activity of Ustilago maydis. Depending on the number of acetyl groups, mannosylerythritol lipids can be differentiated into MEL A (fully acetylated), MEL B and MEL C (monoacetylated at R-6 and R-4, respectively), and the fully deacetylated MEL D. The first step in the pathway is the generation of mannosylerythritol by the glycosyltransferase EMT1 which catalyzes the transfer of GDP-mannose to the C-4 atom of meso-erythritol. This reaction has to be stereospecific, since only mannosyl-D-erythritol is generated. The produced disaccharide is subsequently acylated with fatty acids of various lengths derived from the peroxisomal beta-oxidation by the peroxisomal acyltransferases MAC1 and MAC2 at positions C-2 and C-3, repectively. The existence of MEL derivatives which carry an acetyl group at C-2 implies that at least MAC1 also accepts acetyl-CoA as a donor. The final step of MEL biosynthesis is the acetylation of the fully acylated mannosylerythritol lipids catalyzed by the acetyl-CoA-dependent acetyltransferase MAT1. MAT1 displays a relaxed regioselectivity and is able to transfer acetylgroups to both positions C-4 and C-6 of the mannosyl moiety. In Mycosarcoma maydis (Corn smut fungus), this protein is Erythritol-mannosyl-transferase 1.